The chain runs to 418 residues: Pyruvate kinase isozyme G, chloroplastic (418 aa).

Positions 14 and 15 each coordinate K(+). R21 lines the ATP pocket. A Mg(2+)-binding site is contributed by E165. Substrate-binding residues include G188, D189, and T221. Position 189 (D189) interacts with Mg(2+).

It belongs to the pyruvate kinase family. Mg(2+) serves as cofactor. The cofactor is K(+). Expressed in developing and germinating endosperm and in roots.

Its subcellular location is the plastid. It localises to the chloroplast. It catalyses the reaction pyruvate + ATP = phosphoenolpyruvate + ADP + H(+). It participates in carbohydrate degradation; glycolysis; pyruvate from D-glyceraldehyde 3-phosphate: step 5/5. In Ricinus communis (Castor bean), this protein is Pyruvate kinase isozyme G, chloroplastic.